Reading from the N-terminus, the 166-residue chain is Sec-independent protein translocase protein TatB (166 aa).

Residues 2–22 form a helical membrane-spanning segment; it reads FNDIGALELLTLGVLAVLVFG. Residues 110–166 form a disordered region; the sequence is TPAASDTANSAVNGSAGAAADGVTTSLTKTGETTPDLLKKAPQQAQPERPPFDADAT. Low complexity predominate over residues 117–129; sequence ANSAVNGSAGAAA. Polar residues predominate over residues 132 to 142; that stretch reads VTTSLTKTGET.

It belongs to the TatB family. As to quaternary structure, the Tat system comprises two distinct complexes: a TatABC complex, containing multiple copies of TatA, TatB and TatC subunits, and a separate TatA complex, containing only TatA subunits. Substrates initially bind to the TatABC complex, which probably triggers association of the separate TatA complex to form the active translocon.

The protein localises to the cell membrane. Functionally, part of the twin-arginine translocation (Tat) system that transports large folded proteins containing a characteristic twin-arginine motif in their signal peptide across membranes. Together with TatC, TatB is part of a receptor directly interacting with Tat signal peptides. TatB may form an oligomeric binding site that transiently accommodates folded Tat precursor proteins before their translocation. This Streptomyces griseus subsp. griseus (strain JCM 4626 / CBS 651.72 / NBRC 13350 / KCC S-0626 / ISP 5235) protein is Sec-independent protein translocase protein TatB.